We begin with the raw amino-acid sequence, 526 residues long: 2-isopropylmalate synthase (526 aa).

The region spanning 5 to 267 is the Pyruvate carboxyltransferase domain; sequence VIIFDTTLRD…HTGIRHQEIY (263 aa). 4 residues coordinate Mn(2+): Asp14, His202, His204, and Asn238. Residues 393–526 form a regulatory domain region; it reads RLEYFSVQSG…VPSISTSSTH (134 aa).

Belongs to the alpha-IPM synthase/homocitrate synthase family. LeuA type 1 subfamily. In terms of assembly, homodimer. Requires Mn(2+) as cofactor.

The protein localises to the cytoplasm. The catalysed reaction is 3-methyl-2-oxobutanoate + acetyl-CoA + H2O = (2S)-2-isopropylmalate + CoA + H(+). Its pathway is amino-acid biosynthesis; L-leucine biosynthesis; L-leucine from 3-methyl-2-oxobutanoate: step 1/4. Functionally, catalyzes the condensation of the acetyl group of acetyl-CoA with 3-methyl-2-oxobutanoate (2-ketoisovalerate) to form 3-carboxy-3-hydroxy-4-methylpentanoate (2-isopropylmalate). This is 2-isopropylmalate synthase from Edwardsiella ictaluri (strain 93-146).